A 79-amino-acid polypeptide reads, in one-letter code: Small ribosomal subunit protein bS18 (79 aa).

The protein belongs to the bacterial ribosomal protein bS18 family. As to quaternary structure, part of the 30S ribosomal subunit. Forms a tight heterodimer with protein bS6.

Binds as a heterodimer with protein bS6 to the central domain of the 16S rRNA, where it helps stabilize the platform of the 30S subunit. This is Small ribosomal subunit protein bS18 from Streptococcus pneumoniae (strain Hungary19A-6).